Reading from the N-terminus, the 756-residue chain is MSFGRDMELEHFDERDKAQRYSRGSRVNGLPSPTHSAHCSFYRTRTLQTLSSEKKAKKVRFYRNGDRYFKGIVYAISPDRFRSFEALLADLTRTLSDNVNLPQGVRTIYTIDGLKKISSLDQLVEGESYVCGSIEPFKKLEYTKNVNPNWSVNVKTTSASRAVSSLATAKGGPSEVRENKDFIRPKLVTIIRSGVKPRKAVRILLNKKTAHSFEQVLTDITDAIKLDSGVVKRLYTLDGKQVMCLQDFFGDDDIFIACGPEKFRYQDDFLLDESECRVVKSTSYTKIASASRRGTTKSPGPSRRSKSPASTSSVNGTPGSQLSTPRSGKSPSPSPTSPGSLRKQRISQHGGSSTSLSSTKVCSSMDENDGPGEGDELGRRHSLQRGWRREESEEGFQIPATITERYKVGRTIGDGNFAVVKECIERSTAREYALKIIKKSKCRGKEHMIQNEVSILRRVKHPNIVLLIEEMDVPTELYLVMELVKGGDLFDAITSTSKYTERDASGMLYNLASAIKYLHSLNIVHRDIKPENLLVYEHQDGSKSLKLGDFGLATIVDGPLYTVCGTPTYVAPEIIAETGYGLKVDIWAAGVITYILLCGFPPFRGSGDDQEVLFDQILMGQVDFPSPYWDNVSDSAKELINMMLLVNVDQRFSAVQVLEHPWVNDDGLPENEHQLSVAGKIKKHFNTGPKPSSTAAGVSVIATTALDKERQVFRRRRNQDVRSRYKAQPAPPELNSESEDYSPSSSETVRSPNSPF.

Ser32 and Ser36 each carry phosphoserine. Thr46 is modified (phosphothreonine). Doublecortin domains lie at 57 to 143 (KKVR…LEYT) and 186 to 269 (KLVT…QDDF). A disordered region spans residues 288–393 (ASASRRGTTK…QRGWRREESE (106 aa)). Residues 297–313 (KSPGPSRRSKSPASTSS) show a composition bias toward low complexity. Ser305, Ser307, Ser330, Ser332, Ser334, Ser337, Ser347, Ser352, Ser353, Ser355, Ser358, Cys362, and Ser364 each carry phosphoserine. Positions 347–364 (SQHGGSSTSLSSTKVCSS) are enriched in low complexity. Residues 366 to 375 (DENDGPGEGD) are compositionally biased toward acidic residues. Ser392 is modified (phosphoserine). The Protein kinase domain occupies 406–663 (YKVGRTIGDG…AVQVLEHPWV (258 aa)). ATP-binding positions include 412–420 (IGDGNFAVV) and Lys435. Residue Asp527 is the Proton acceptor of the active site. Tyr536 carries the phosphotyrosine modification. Positions 711-723 (QVFRRRRNQDVRS) are enriched in basic and acidic residues. The tract at residues 711–756 (QVFRRRRNQDVRSRYKAQPAPPELNSESEDYSPSSSETVRSPNSPF) is disordered. Residues Ser742, Ser751, and Ser754 each carry the phosphoserine modification.

The protein belongs to the protein kinase superfamily. CAMK Ser/Thr protein kinase family. CaMK subfamily.

It catalyses the reaction L-seryl-[protein] + ATP = O-phospho-L-seryl-[protein] + ADP + H(+). It carries out the reaction L-threonyl-[protein] + ATP = O-phospho-L-threonyl-[protein] + ADP + H(+). Probable kinase that may be involved in a calcium-signaling pathway controlling neuronal migration in the developing brain. May also participate in functions of the mature nervous system. The protein is Serine/threonine-protein kinase DCLK1 (Dclk1) of Mus musculus (Mouse).